A 484-amino-acid polypeptide reads, in one-letter code: Cobyric acid synthase (484 aa).

The 188-residue stretch at 248 to 435 (VLKVIVPVLP…LHGLFEGSQS (188 aa)) folds into the GATase cobBQ-type domain. The active-site Nucleophile is cysteine 329. Histidine 427 is an active-site residue.

This sequence belongs to the CobB/CobQ family. CobQ subfamily.

The protein operates within cofactor biosynthesis; adenosylcobalamin biosynthesis. Catalyzes amidations at positions B, D, E, and G on adenosylcobyrinic A,C-diamide. NH(2) groups are provided by glutamine, and one molecule of ATP is hydrogenolyzed for each amidation. This is Cobyric acid synthase from Pseudomonas putida (strain ATCC 700007 / DSM 6899 / JCM 31910 / BCRC 17059 / LMG 24140 / F1).